A 955-amino-acid chain; its full sequence is Structure-specific endonuclease subunit SLX4 (955 aa).

7 disordered regions span residues 75-173 (QAEQ…RTTS), 189-231 (PVTT…TVSR), 352-376 (GPSN…KKPR), 539-608 (EMQK…PTKI), 621-648 (PIVA…PPPR), 705-784 (AAGQ…ASPD), and 819-846 (LDSD…EKDS). Basic residues predominate over residues 123–137 (RKARKTANGVTKKKR). A compositionally biased stretch (polar residues) spans 150–159 (NEITTPTKNQ). The segment covering 189 to 198 (PVTTSTTDLT) has biased composition (low complexity). Positions 209-225 (TKSRVRKTSSAASRKKK) are enriched in basic residues. Positions 352–362 (GPSNDSKIPNQ) are enriched in polar residues. Positions 539-551 (EMQKSPSRSEPKG) are enriched in basic and acidic residues. Polar residues predominate over residues 579 to 601 (SANSAEHTLKTQASKSTHFASTT). Composition is skewed to low complexity over residues 705–720 (AAGQ…RTSA) and 727–737 (KTSTAAAAAKS). Basic residues-rich tracts occupy residues 738–748 (PTKRPVGRPRK) and 767–776 (KRPRGRPKKN). Residues 828-841 (SPSPSLSPEPVFSS) show a composition bias toward low complexity.

The protein belongs to the SLX4 family. In terms of assembly, forms a heterodimer with SLX1. In terms of processing, phosphorylated in response to DNA damage.

The protein localises to the nucleus. In terms of biological role, regulatory subunit of the SLX1-SLX4 structure-specific endonuclease that resolves DNA secondary structures generated during DNA repair and recombination. Has endonuclease activity towards branched DNA substrates, introducing single-strand cuts in duplex DNA close to junctions with ss-DNA. This chain is Structure-specific endonuclease subunit SLX4, found in Pyricularia oryzae (strain 70-15 / ATCC MYA-4617 / FGSC 8958) (Rice blast fungus).